The chain runs to 149 residues: Large ribosomal subunit protein uL13 (149 aa).

The protein belongs to the universal ribosomal protein uL13 family. Part of the 50S ribosomal subunit.

This protein is one of the early assembly proteins of the 50S ribosomal subunit, although it is not seen to bind rRNA by itself. It is important during the early stages of 50S assembly. The sequence is that of Large ribosomal subunit protein uL13 from Cyanothece sp. (strain PCC 7425 / ATCC 29141).